Reading from the N-terminus, the 293-residue chain is LNECKQLNENQVRTLCEKAKEILTKESNVQEVRCPVTVCGDVHGQFHDLMELFRIGGKSPDTNYLFMGDYVDRGYYSVETVTLLVALKVRYPERITILRGNHESRQITQVYGFYDECLRKYGNANVWKYFTDLFDYLPLTALVDGQIFCLHGGLSPSIDTLDHIRALDRLQEVPHEGPMCDLLWSDPDDRGGWGISPRGAGYTFGQDISETFNHANGLTLVSRAHQLVMEGYNWCHDRNVVTIFSAPNYCYRCGNQAAIMELDDTLKYSFLQFDPAPRRGEPHVTRRTPDYFL.

The Mn(2+) site is built by Asp-41, His-43, Asp-69, and Asn-101. His-102 functions as the Proton donor in the catalytic mechanism. Positions 151 and 225 each coordinate Mn(2+). Tyr-291 is subject to Phosphotyrosine. Position 293 is a leucine methyl ester (Leu-293).

Belongs to the PPP phosphatase family. PP-1 subfamily. Found in a complex with at least ARL2, PPP2CB, PPP2R1A, PPP2R2A, PPP2R5E and TBCD. Interacts with TBCD. PP2A consists of a common heterodimeric core enzyme (composed of a 36 kDa catalytic subunit (subunit C) and a 65 kDa constant regulatory subunit (PR65) (subunit A)) that associates with a variety of regulatory subunits. Proteins that associate with the core dimer include three families of regulatory subunits B (the R2/B/PR55/B55, R3/B''/PR72/PR130/PR59 and R5/B'/B56 families), the 48 kDa variable regulatory subunit, viral proteins, and cell signaling molecules. Binds PPME1. May indirectly interact with SGO1, most probably through regulatory B56 subunits. Interacts with CTTNBP2NL. Interacts with PTPA. Part of the core of STRIPAK complexes composed of PP2A catalytic and scaffolding subunits, the striatins (PP2A regulatory subunits), the striatin-associated proteins MOB4, STRIP1 and STRIP2, PDCD10 and members of the STE20 kinases, such as STK24 and STK26. Mn(2+) serves as cofactor. Post-translationally, reversibly methyl esterified on Leu-293 by leucine carboxyl methyltransferase 1 (Lcmt1) and protein phosphatase methylesterase 1 (PPME1). Carboxyl methylation influences the affinity of the catalytic subunit for the different regulatory subunits, thereby modulating the PP2A holoenzyme's substrate specificity, enzyme activity and cellular localization. In terms of processing, phosphorylation of either threonine (by autophosphorylation-activated protein kinase) or tyrosine results in inactivation of the phosphatase. Auto-dephosphorylation has been suggested as a mechanism for reactivation. May be monoubiquitinated by NOSIP.

The protein localises to the cytoplasm. It is found in the nucleus. It localises to the chromosome. The protein resides in the centromere. Its subcellular location is the cytoskeleton. The protein localises to the spindle pole. It carries out the reaction O-phospho-L-seryl-[protein] + H2O = L-seryl-[protein] + phosphate. The enzyme catalyses O-phospho-L-threonyl-[protein] + H2O = L-threonyl-[protein] + phosphate. In terms of biological role, catalytic subunit of protein phosphatase 2A (PP2A), a serine/threonine phosphatase involved in the regulation of a wide variety of enzymes, signal transduction pathways, and cellular events. PP2A can modulate the activity of phosphorylase B kinase, casein kinase 2, mitogen-stimulated S6 kinase, and MAP-2 kinase. Part of the striatin-interacting phosphatase and kinase (STRIPAK) complexes. STRIPAK complexes have critical roles in protein (de)phosphorylation and are regulators of multiple signaling pathways including Hippo, MAPK, nuclear receptor and cytoskeleton remodeling. Different types of STRIPAK complexes are involved in a variety of biological processes such as cell growth, differentiation, apoptosis, metabolism and immune regulation. The polypeptide is Serine/threonine-protein phosphatase 2A catalytic subunit beta isoform (PPP2CB) (Sus scrofa (Pig)).